Reading from the N-terminus, the 93-residue chain is Large ribosomal subunit protein bL31B (93 aa).

Belongs to the bacterial ribosomal protein bL31 family. Type B subfamily. In terms of assembly, part of the 50S ribosomal subunit.

This is Large ribosomal subunit protein bL31B from Pseudomonas syringae pv. syringae (strain B728a).